We begin with the raw amino-acid sequence, 254 residues long: Probable electron transfer flavoprotein subunit beta (254 aa).

This sequence belongs to the ETF beta-subunit/FixA family. In terms of assembly, heterodimer of an alpha and a beta subunit. Requires FAD as cofactor. AMP serves as cofactor.

The protein resides in the mitochondrion matrix. In terms of biological role, the electron transfer flavoprotein serves as a specific electron acceptor for several dehydrogenases, including five acyl-CoA dehydrogenases, glutaryl-CoA and sarcosine dehydrogenase. It transfers the electrons to the main mitochondrial respiratory chain via ETF-ubiquinone oxidoreductase (ETF dehydrogenase). This is Probable electron transfer flavoprotein subunit beta from Schizosaccharomyces pombe (strain 972 / ATCC 24843) (Fission yeast).